A 504-amino-acid chain; its full sequence is uncharacterized protein (504 aa).

Residues 36 to 60 (TAFRMEKEQRLPSQNKPPRGRRRPD) are disordered. The 185-residue stretch at 125 to 309 (QTHEPGRLGL…RPHLQVLPER (185 aa)) folds into the Integrase catalytic domain.

This is an uncharacterized protein from Sinorhizobium fredii (strain NBRC 101917 / NGR234).